Reading from the N-terminus, the 410-residue chain is Cysteine desulfurase IscS (410 aa).

Pyridoxal 5'-phosphate contacts are provided by residues 80-81, asparagine 160, glutamine 188, and 208-210; these read AT and SGH. N6-(pyridoxal phosphate)lysine is present on lysine 211. Threonine 248 is a binding site for pyridoxal 5'-phosphate. Cysteine 334 acts as the Cysteine persulfide intermediate in catalysis. Cysteine 334 contacts [2Fe-2S] cluster.

This sequence belongs to the class-V pyridoxal-phosphate-dependent aminotransferase family. NifS/IscS subfamily. In terms of assembly, homodimer. Forms a heterotetramer with IscU, interacts with other sulfur acceptors. Pyridoxal 5'-phosphate is required as a cofactor.

Its subcellular location is the cytoplasm. It catalyses the reaction (sulfur carrier)-H + L-cysteine = (sulfur carrier)-SH + L-alanine. Its pathway is cofactor biosynthesis; iron-sulfur cluster biosynthesis. Functionally, master enzyme that delivers sulfur to a number of partners involved in Fe-S cluster assembly, tRNA modification or cofactor biosynthesis. Catalyzes the removal of elemental sulfur atoms from cysteine to produce alanine. Functions as a sulfur delivery protein for Fe-S cluster synthesis onto IscU, an Fe-S scaffold assembly protein, as well as other S acceptor proteins. In Rickettsia africae (strain ESF-5), this protein is Cysteine desulfurase IscS.